The chain runs to 451 residues: Phosphoglucosamine mutase (451 aa).

Ser-107 serves as the catalytic Phosphoserine intermediate. Residues Ser-107, Asp-246, Asp-248, and Asp-250 each contribute to the Mg(2+) site. Phosphoserine is present on Ser-107.

The protein belongs to the phosphohexose mutase family. It depends on Mg(2+) as a cofactor. In terms of processing, activated by phosphorylation.

It catalyses the reaction alpha-D-glucosamine 1-phosphate = D-glucosamine 6-phosphate. Catalyzes the conversion of glucosamine-6-phosphate to glucosamine-1-phosphate. The sequence is that of Phosphoglucosamine mutase from Azoarcus sp. (strain BH72).